We begin with the raw amino-acid sequence, 1340 residues long: MDFQNDFLTNPLRVTLYNPAENEYTKTFIFLGSVPANVLQACRKDLQRTPKDKEILQNFYGKDWEKKLSQYVVGGDSDDLDEFEKLFVEDSGEETNVMMPEIETMYSEYSIFPEDTFKDIREKIYVATGIPPYRQHIFFFQNNALQVTYRLLLSGSGVALDIRDYKKEFQQVGGLNIDASMESQKDELYVEALDSFQLIKNIHHIFVADLNTLVAPMRRQISIAMEDNYQFDLLYYGLIMKYWPLLSPDAFKLLVQSPLQMEKQYPALSPSLTSLKKRLLLEQKLINFTYARAQQVIAKYEGNRLTRGTLAVTSAMIKISPLVNIQINVRNVFDLFPATPDIPQLVVFFYSKTGPTVVSKHHITSTEPEKFSNKTFRVPTIILIRFINKKAFILTIQNNGHYFIESNWSENERHDFNSVVSTLNNFINPIIHTINDMGPAAFPRGGSLPLPSNEDIQISISSMSVSTFWPYTLSSKGFTELKSRWREYEQAGIISVRGLQQTGIYNFLFKKGIYSYDPHEIERMIIISSGPGRKMDINVALLQNTYAYLFDANVAARWETIYGGRNIRIYHRVTDIKIEMFNITQEEFNYLWVYLFVFLDNLITGPDKILVNKLSQLHDKQQGKGASQLRALQEQDPDLYDLRKYDTQATVYSVLCQHPRPPVIYSEAEVKSMPPAKRKELVKYWNFTEGVPAYYSCPHPDYPHLSLLEGRHPLNYCLPCCQKTKALLGTKRFYINNTCLTKHTFVEQDLEDLNTQTSRHTLSYGKKIPVNRIAFLPHQIADELFLNTIKEPDIFCIVGVEQTMLGISNAGLFYSLARILDLAPKALAIEIAKAANTPQYYILGNGAGNMFSSGAELANLILQTFVEQKNQLLQWDTTWQDIFLDLVAICYDLHCVFFKDKQGDIEFEVSPSTIQKILSPSKKIAIIFDTDEGIYPMAITQQKRFLKNSEAQYIFTEDDPVMEVVQSMSEFMCKDNWWDIHDVKNIPGYTVGKKLINRHNFCYALLIDSDTDRPIYFPIRLSSYIHDDIPIDFDLRPTQIASFEETWKFITLFNKQYKQYEIVPSAVLQNIKKEFVGFLSEGKTGLYFYYAPTQTLPATLEKLPIATLTIDPRDIDQAILYPLEEPYPQQNKANKAFYINHLYKFLLIEFFDVLYGLQSNSTRKHIENLFQKTDFQKITSVTEFYTKLSDFVDLNDIHTIKHILETTDAEHALKVLQKNIFNFDYTLLSPLQSYTYDELCQHLKKLLTPRIEFYEDIETIDRGLINIYTSCQYSTLNQPQCKKKRLRIPVNHFENYIHILAADILNPLKHSTLLLTGLGVIDDLQFILRPQEIISVKNKF.

It belongs to the asfivirus G1340L family.

The protein localises to the virion. Functionally, putative initation factor. The protein is Early transcription factor large subunit homolog of African swine fever virus (strain Badajoz 1971 Vero-adapted) (Ba71V).